Here is a 1609-residue protein sequence, read N- to C-terminus: Laminin subunit gamma-1 (1609 aa).

Positions 1-33 are cleaved as a signal peptide; the sequence is MRGSHRAAPALRPRGRLWPVLAVLAAAAAAGCA. The region spanning 46-285 is the Laminin N-terminal domain; it reads RPQRCMPEFV…AISDFAVGGR (240 aa). 2 N-linked (GlcNAc...) asparagine glycosylation sites follow: Asn60 and Asn134. Intrachain disulfides connect Cys286–Cys295, Cys288–Cys305, Cys307–Cys316, Cys319–Cys339, Cys342–Cys351, Cys344–Cys367, Cys370–Cys379, Cys382–Cys395, Cys398–Cys410, Cys400–Cys416, Cys418–Cys427, Cys430–Cys442, Cys445–Cys456, Cys447–Cys463, Cys465–Cys474, and Cys477–Cys492. 4 consecutive Laminin EGF-like domains span residues 286 to 341, 342 to 397, 398 to 444, and 445 to 494; these read CKCN…ECLP, CDCN…ACSS, CHCS…GCRP, and CSCD…GCTP. A Laminin EGF-like 5; first part domain is found at 495–504; sequence CFCFGHSSVC. The Laminin IV type A domain maps to 514–689; it reads SISSTFQIDE…PGVPATWVES (176 aa). N-linked (GlcNAc...) asparagine glycans are attached at residues Asn576 and Asn650. A Laminin EGF-like 5; second part domain is found at 690–723; that stretch reads CTCPVGYGGQFCEMCLSGYRRETPNLGPYSPCVL. Intrachain disulfides connect Cys724/Cys733, Cys726/Cys740, Cys742/Cys751, Cys754/Cys770, Cys773/Cys781, Cys775/Cys792, Cys795/Cys804, Cys807/Cys825, Cys828/Cys842, Cys830/Cys849, Cys852/Cys861, Cys864/Cys881, Cys884/Cys898, Cys886/Cys905, Cys907/Cys916, Cys919/Cys932, Cys935/Cys947, Cys937/Cys954, Cys956/Cys965, Cys968/Cys980, Cys983/Cys995, Cys985/Cys1001, Cys1003/Cys1012, and Cys1015/Cys1028. Laminin EGF-like domains lie at 724 to 772, 773 to 827, 828 to 883, 884 to 934, 935 to 982, and 983 to 1030; these read CACN…DCQP, CPCP…LCRL, CQCS…KCKA, CNCN…GCER, CDCH…GCKP, and CDCH…GCQE. Residues Asn1022 and Asn1107 are each glycosylated (N-linked (GlcNAc...) asparagine). Residues 1030 to 1609 form a domain II and I region; it reads ECPACYRLVK…CFNTPSIEKP (580 aa). The stretch at 1038–1609 forms a coiled coil; the sequence is VKDKVADHRV…CFNTPSIEKP (572 aa). A Phosphoserine; by FAM20C modification is found at Ser1149. N-linked (GlcNAc...) asparagine glycosylation is found at Asn1161, Asn1175, Asn1205, Asn1223, Asn1241, Asn1380, Asn1395, and Asn1439. Position 1493 is a phosphoserine (Ser1493).

In terms of assembly, laminin is a complex glycoprotein, consisting of three different polypeptide chains (alpha, beta, gamma), which are bound to each other by disulfide bonds into a cross-shaped molecule comprising one long and three short arms with globules at each end. Gamma-1 is a subunit of laminin-1 (laminin-111 or EHS laminin), laminin-2 (laminin-211 or merosin), laminin-3 (laminin-121 or S-laminin), laminin-4 (laminin-221 or S-merosin), laminin-6 (laminin-311 or K-laminin), laminin-7 (laminin-321 or KS-laminin), laminin-8 (laminin-411), laminin-9 (laminin-421), laminin-10 (laminin-511) and laminin-11 (laminin-521). Interacts with SVEP1. In terms of tissue distribution, found in the basement membranes (major component).

It localises to the secreted. Its subcellular location is the extracellular space. The protein localises to the extracellular matrix. The protein resides in the basement membrane. Binding to cells via a high affinity receptor, laminin is thought to mediate the attachment, migration and organization of cells into tissues during embryonic development by interacting with other extracellular matrix components. This Homo sapiens (Human) protein is Laminin subunit gamma-1.